Reading from the N-terminus, the 434-residue chain is ATP-dependent protease ATPase subunit HslU (434 aa).

Residues Val-18, 60 to 65, Asp-247, Glu-312, and Arg-384 each bind ATP; that span reads GVGKTE.

The protein belongs to the ClpX chaperone family. HslU subfamily. As to quaternary structure, a double ring-shaped homohexamer of HslV is capped on each side by a ring-shaped HslU homohexamer. The assembly of the HslU/HslV complex is dependent on binding of ATP.

It localises to the cytoplasm. In terms of biological role, ATPase subunit of a proteasome-like degradation complex; this subunit has chaperone activity. The binding of ATP and its subsequent hydrolysis by HslU are essential for unfolding of protein substrates subsequently hydrolyzed by HslV. HslU recognizes the N-terminal part of its protein substrates and unfolds these before they are guided to HslV for hydrolysis. In Phenylobacterium zucineum (strain HLK1), this protein is ATP-dependent protease ATPase subunit HslU.